The following is a 741-amino-acid chain: Catalase-peroxidase 2 (741 aa).

Residues 1–27 (MKINTLPTLSALTLAMSLALGAGMATA) form the signal peptide. The segment at residues 106–229 (WHSAGVYRIF…MGATQMGLIY (124 aa)) is a cross-link (tryptophyl-tyrosyl-methioninium (Trp-Tyr) (with M-255)). The Proton acceptor role is filled by His-107. Residues 229 to 255 (YVNPEGPNGVPDPLASAKEIRDTFGRM) constitute a cross-link (tryptophyl-tyrosyl-methioninium (Tyr-Met) (with W-106)). His-270 contributes to the heme b binding site.

It belongs to the peroxidase family. Peroxidase/catalase subfamily. As to quaternary structure, homodimer or homotetramer. Heme b serves as cofactor. Post-translationally, formation of the three residue Trp-Tyr-Met cross-link is important for the catalase, but not the peroxidase activity of the enzyme.

The enzyme catalyses H2O2 + AH2 = A + 2 H2O. The catalysed reaction is 2 H2O2 = O2 + 2 H2O. In terms of biological role, bifunctional enzyme with both catalase and broad-spectrum peroxidase activity. This chain is Catalase-peroxidase 2, found in Shewanella oneidensis (strain ATCC 700550 / JCM 31522 / CIP 106686 / LMG 19005 / NCIMB 14063 / MR-1).